The chain runs to 482 residues: ATP synthase subunit beta (482 aa).

ATP is bound at residue 161-168 (GGAGVGKT).

It belongs to the ATPase alpha/beta chains family. F-type ATPases have 2 components, CF(1) - the catalytic core - and CF(0) - the membrane proton channel. CF(1) has five subunits: alpha(3), beta(3), gamma(1), delta(1), epsilon(1). CF(0) has four main subunits: a(1), b(1), b'(1) and c(9-12).

It localises to the cellular thylakoid membrane. The catalysed reaction is ATP + H2O + 4 H(+)(in) = ADP + phosphate + 5 H(+)(out). Functionally, produces ATP from ADP in the presence of a proton gradient across the membrane. The catalytic sites are hosted primarily by the beta subunits. The chain is ATP synthase subunit beta from Microcystis aeruginosa (strain NIES-843 / IAM M-2473).